A 116-amino-acid polypeptide reads, in one-letter code: Large ribosomal subunit protein uL18 (116 aa).

Belongs to the universal ribosomal protein uL18 family. Part of the 50S ribosomal subunit; part of the 5S rRNA/L5/L18/L25 subcomplex. Contacts the 5S and 23S rRNAs.

This is one of the proteins that bind and probably mediate the attachment of the 5S RNA into the large ribosomal subunit, where it forms part of the central protuberance. This chain is Large ribosomal subunit protein uL18, found in Shewanella frigidimarina (strain NCIMB 400).